The chain runs to 342 residues: MEDSEEHHFSSVEEETRYWKELAMKYKQCAENIQEELCEFQEGSREYEAELETQLQQTESRNRDLLSENNRLRIELESVKEKFEMQHSEWYRQVSALEDDLAQTKAIKDQLQKYIRELEQANDDLERAKRAAIMSLEDFEQRLNQAIERNAFLESELDEKENLLESVQRLKDEARDLRQELAVQQKQEKPKTPMRTSLETERTDTAVQASLSLPSTPSLHRAPNINIPTPATFRRGFEDSYCATPLTPAARISALNIMGDLLRKVGALESKLASCRNFVYDQSPDRTTVSMYMNRDALETRMSPHQPLCDTGLVKRLEFGTRPSSTPGPMSHPSQSVVKMLL.

Positions 45 to 189 form a coiled coil; sequence REYEAELETQ…ELAVQQKQEK (145 aa). Positions 89-157 are interaction with PAFAH1B1; sequence EWYRQVSALE…ERNAFLESEL (69 aa). Disordered stretches follow at residues 182 to 203 and 320 to 342; these read AVQQKQEKPKTPMRTSLETERT and GTRPSSTPGPMSHPSQSVVKMLL. The segment covering 322 to 342 has biased composition (polar residues); that stretch reads RPSSTPGPMSHPSQSVVKMLL.

Belongs to the nudE family. Self-associates. Interacts with PAFAH1B1. Phosphorylated in mitosis.

Its subcellular location is the cytoplasm. The protein localises to the cytoskeleton. It is found in the microtubule organizing center. It localises to the centrosome. The protein resides in the spindle. Its subcellular location is the chromosome. The protein localises to the centromere. It is found in the kinetochore. It localises to the cleavage furrow. The protein resides in the cytoplasmic vesicle membrane. In terms of biological role, required for centrosome duplication and formation and function of the mitotic spindle. This is Nuclear distribution protein nudE homolog 1 (NDE1) from Gallus gallus (Chicken).